The chain runs to 295 residues: Voltage-gated potassium channel (295 aa).

Residues 1-38 are Cytoplasmic-facing; that stretch reads MSVERWVFPGCSVMARFRRGLSDLGGRVRNIGDVMEHP. Residues 39–63 traverse the membrane as a helical segment; sequence LVELGVSYAALLSVIVVVVEYTMQL. At 64-67 the chain is on the extracellular side; it reads SGEY. The chain crosses the membrane as a helical span at residues 68–92; that stretch reads LVRLYLVDLILVIILWADYAYRAYK. At 93–96 the chain is on the cytoplasmic side; sequence SGDP. The helical intramembrane region spans 97 to 105; that stretch reads AGYVKKTLY. At 106 to 108 the chain is on the extracellular side; it reads EIP. Residues 109–125 form a helical; Voltage-sensor membrane-spanning segment; sequence ALVPAGLLALIEGHLAG. The Cytoplasmic portion of the chain corresponds to 126–128; the sequence is LGL. Residues 129–145 form a helical; Voltage-sensor membrane-spanning segment; the sequence is FRLVRLLRFLRILLIIS. The Cytoplasmic portion of the chain corresponds to 146 to 159; the sequence is RGSKFLSAIADAAD. Residues 160–184 form a helical membrane-spanning segment; the sequence is KIRFYHLFGAVMLTVLYGAFAIYIV. Residues 185–195 lie on the Extracellular side of the membrane; sequence EYPDPNSSIKS. The segment at residues 196-208 is an intramembrane region (pore-forming); it reads VFDALWWAVVTAT. Residues 209–214 carry the Selectivity filter motif; the sequence is TVGYGD. The Extracellular segment spans residues 209–221; sequence TVGYGDVVPATPI. Residues 222–253 traverse the membrane as a helical segment; that stretch reads GKVIGIAVMLTGISALTLLIGTVSNMFQKILV. Topologically, residues 254–295 are cytoplasmic; that stretch reads GEPEPSCSPAKLAEMVSSMSEEEFEEFVRTLKNLRRLENSMK.

It belongs to the potassium channel family.

It is found in the cell membrane. Its function is as follows. Mediates a strong voltage-dependent potassium ion permeability of excitable membranes. Assuming opened or closed conformations in response to the voltage difference across the membrane, the protein forms a potassium-selective channel through which potassium ions may pass in accordance with their electrochemical gradient. This is Voltage-gated potassium channel from Aeropyrum pernix (strain ATCC 700893 / DSM 11879 / JCM 9820 / NBRC 100138 / K1).